Here is a 359-residue protein sequence, read N- to C-terminus: Ribosomal RNA large subunit methyltransferase M (359 aa).

S-adenosyl-L-methionine is bound by residues Ser-186, 219 to 222, Asp-238, Asp-258, and Asp-275; that span reads CPGG. The Proton acceptor role is filled by Lys-304.

The protein belongs to the class I-like SAM-binding methyltransferase superfamily. RNA methyltransferase RlmE family. RlmM subfamily. As to quaternary structure, monomer.

It is found in the cytoplasm. It catalyses the reaction cytidine(2498) in 23S rRNA + S-adenosyl-L-methionine = 2'-O-methylcytidine(2498) in 23S rRNA + S-adenosyl-L-homocysteine + H(+). In terms of biological role, catalyzes the 2'-O-methylation at nucleotide C2498 in 23S rRNA. The protein is Ribosomal RNA large subunit methyltransferase M of Vibrio parahaemolyticus serotype O3:K6 (strain RIMD 2210633).